The chain runs to 276 residues: Glutamate racemase (276 aa).

Substrate contacts are provided by residues 12–13 and 44–45; these read DS and YG. The active-site Proton donor/acceptor is cysteine 76. 77–78 provides a ligand contact to substrate; that stretch reads NT. Residue cysteine 187 is the Proton donor/acceptor of the active site. 188–189 contacts substrate; it reads TH.

This sequence belongs to the aspartate/glutamate racemases family.

The enzyme catalyses L-glutamate = D-glutamate. Its pathway is cell wall biogenesis; peptidoglycan biosynthesis. In terms of biological role, provides the (R)-glutamate required for cell wall biosynthesis. This chain is Glutamate racemase, found in Granulibacter bethesdensis (strain ATCC BAA-1260 / CGDNIH1).